Here is a 99-residue protein sequence, read N- to C-terminus: Acylphosphatase (99 aa).

An Acylphosphatase-like domain is found at 5 to 97; sequence VRQIVIRGRV…RPGERFSQLP (93 aa). Active-site residues include Arg-20 and Asn-38.

It belongs to the acylphosphatase family.

The enzyme catalyses an acyl phosphate + H2O = a carboxylate + phosphate + H(+). The polypeptide is Acylphosphatase (acyP) (Nitrobacter hamburgensis (strain DSM 10229 / NCIMB 13809 / X14)).